The chain runs to 444 residues: Transcription activator AFTR-2 (444 aa).

A DNA-binding region (zn(2)-C6 fungal-type) is located at residues 16-43 (CDFCTQSKLRCNKNKPSCRRCTLQQQPC). A disordered region spans residues 49–88 (RRTGRPPKHPRKANDCQEANGQHGDQDPVTSTPGGSYQQQ). Over residues 50–59 (RTGRPPKHPR) the composition is skewed to basic residues. Polar residues predominate over residues 76–88 (PVTSTPGGSYQQQ).

It localises to the nucleus. Its function is as follows. Transcription factor that regulates the expression of the gene clusters that mediate the biosynthesis of the host-selective toxins (HSTs) AF-toxins responsible for Alternaria black spot of strawberry disease by the strawberry pathotype. On cellular level, AF-toxins affect plasma membrane of susceptible cells and cause a sudden increase in loss of K(+) after a few minutes of toxin treatment. The chain is Transcription activator AFTR-2 from Alternaria alternata (Alternaria rot fungus).